The following is a 259-amino-acid chain: Probable ABC transporter permease protein RC0129 (259 aa).

The next 5 membrane-spanning stretches (helical) occupy residues 13–35 (TVKFAQSVGSFSLFSFAAVSSII), 49–69 (LFIGFHSLPVVAMTTFFSGAV), 148–168 (VITAIITMPCLVLIGDIIGVM), 195–215 (PIDVISGLVKAGVFGFIISII), and 237–257 (AVVNSSILILISNYLITELFF).

The protein belongs to the MlaE permease family.

Its subcellular location is the cell inner membrane. Functionally, could be part of an ABC transporter complex. This Rickettsia conorii (strain ATCC VR-613 / Malish 7) protein is Probable ABC transporter permease protein RC0129.